The following is an 877-amino-acid chain: Leucine--tRNA ligase (877 aa).

The 'HIGH' region signature appears at 50–60; the sequence is PYPSGKLHMGH. A 'KMSKS' region motif is present at residues 634–638; it reads KMSKS. K637 lines the ATP pocket.

It belongs to the class-I aminoacyl-tRNA synthetase family.

It is found in the cytoplasm. It catalyses the reaction tRNA(Leu) + L-leucine + ATP = L-leucyl-tRNA(Leu) + AMP + diphosphate. The sequence is that of Leucine--tRNA ligase from Hydrogenovibrio crunogenus (strain DSM 25203 / XCL-2) (Thiomicrospira crunogena).